Consider the following 122-residue polypeptide: Small ribosomal subunit protein uS13 (122 aa).

A disordered region spans residues 98 to 122 (VRGQKTKSNARTRKGPRPSRIKKKK). Residues 101–122 (QKTKSNARTRKGPRPSRIKKKK) are compositionally biased toward basic residues.

It belongs to the universal ribosomal protein uS13 family. In terms of assembly, part of the 30S ribosomal subunit. Forms a loose heterodimer with protein S19. Forms two bridges to the 50S subunit in the 70S ribosome.

In terms of biological role, located at the top of the head of the 30S subunit, it contacts several helices of the 16S rRNA. In the 70S ribosome it contacts the 23S rRNA (bridge B1a) and protein L5 of the 50S subunit (bridge B1b), connecting the 2 subunits; these bridges are implicated in subunit movement. Contacts the tRNAs in the A and P-sites. This chain is Small ribosomal subunit protein uS13, found in Thermosipho africanus (strain TCF52B).